A 309-amino-acid chain; its full sequence is Serine/threonine-protein phosphatase 4 catalytic subunit (309 aa).

Residues D52, H54, D80, and N112 each coordinate Mn(2+). The active-site Proton donor is the H113. Mn(2+) contacts are provided by H162 and H236. L309 is subject to Leucine methyl ester.

This sequence belongs to the PPP phosphatase family. PP-4 (PP-X) subfamily. In terms of assembly, catalytic subunit of the histone H2A phosphatase complex (HTP-C) containing PPH3, PSY2 and PSY4. Requires Mn(2+) as cofactor.

Its subcellular location is the cytoplasm. The protein localises to the nucleus. The enzyme catalyses O-phospho-L-seryl-[protein] + H2O = L-seryl-[protein] + phosphate. It carries out the reaction O-phospho-L-threonyl-[protein] + H2O = L-threonyl-[protein] + phosphate. Functionally, forms the histone H2A phosphatase complex in association with the regulatory subunits PSY2 and PSY4, which dephosphorylates H2AS128ph (gamma-H2A) that has been displaced from sites of DNA lesions in the double-stranded DNA break repair process. Dephosphorylation is necessary for efficient recovery from the DNA damage checkpoint. This chain is Serine/threonine-protein phosphatase 4 catalytic subunit (PPH3), found in Candida glabrata (strain ATCC 2001 / BCRC 20586 / JCM 3761 / NBRC 0622 / NRRL Y-65 / CBS 138) (Yeast).